The sequence spans 359 residues: 3-dehydroquinate synthase (359 aa).

Residues 105–109 (GVVGD), 129–130 (TT), lysine 142, lysine 151, and 169–172 (TIKT) contribute to the NAD(+) site. Residues glutamate 184, histidine 247, and histidine 263 each contribute to the Zn(2+) site.

This sequence belongs to the sugar phosphate cyclases superfamily. Dehydroquinate synthase family. The cofactor is Co(2+). Zn(2+) serves as cofactor. It depends on NAD(+) as a cofactor.

It localises to the cytoplasm. The enzyme catalyses 7-phospho-2-dehydro-3-deoxy-D-arabino-heptonate = 3-dehydroquinate + phosphate. Its pathway is metabolic intermediate biosynthesis; chorismate biosynthesis; chorismate from D-erythrose 4-phosphate and phosphoenolpyruvate: step 2/7. Functionally, catalyzes the conversion of 3-deoxy-D-arabino-heptulosonate 7-phosphate (DAHP) to dehydroquinate (DHQ). This Ruminiclostridium cellulolyticum (strain ATCC 35319 / DSM 5812 / JCM 6584 / H10) (Clostridium cellulolyticum) protein is 3-dehydroquinate synthase.